Consider the following 263-residue polypeptide: Proteasome subunit beta type-4 (263 aa).

Position 1 is an N-acetylmethionine (Met-1). The propeptide occupies 1-44 (MEAFWESRTGHWAGGPAPGQFYRVPSTPSCLMDPMSAPARPITR). Ser-26 bears the Phosphoserine mark. A Phosphotyrosine modification is found at Tyr-101.

It belongs to the peptidase T1B family. The 26S proteasome consists of a 20S proteasome core and two 19S regulatory subunits. The 20S proteasome core is a barrel-shaped complex made of 28 subunits that are arranged in four stacked rings. The two outer rings are each formed by seven alpha subunits, and the two inner rings are formed by seven beta subunits. The proteolytic activity is exerted by three beta-subunits PSMB5, PSMB6 and PSMB7. Forms a ternary complex with SMAD1 and OAZ1 before PSMB4 is incorporated into the 20S proteasome. Interacts with PRPF19.

The protein localises to the cytoplasm. The protein resides in the nucleus. Its function is as follows. Non-catalytic component of the 20S core proteasome complex involved in the proteolytic degradation of most intracellular proteins. This complex plays numerous essential roles within the cell by associating with different regulatory particles. Associated with two 19S regulatory particles, forms the 26S proteasome and thus participates in the ATP-dependent degradation of ubiquitinated proteins. The 26S proteasome plays a key role in the maintenance of protein homeostasis by removing misfolded or damaged proteins that could impair cellular functions, and by removing proteins whose functions are no longer required. Associated with the PA200 or PA28, the 20S proteasome mediates ubiquitin-independent protein degradation. This type of proteolysis is required in several pathways including spermatogenesis (20S-PA200 complex) or generation of a subset of MHC class I-presented antigenic peptides (20S-PA28 complex). SMAD1/OAZ1/PSMB4 complex mediates the degradation of the CREBBP/EP300 repressor SNIP1. The sequence is that of Proteasome subunit beta type-4 (Psmb4) from Rattus norvegicus (Rat).